Reading from the N-terminus, the 206-residue chain is Holliday junction branch migration complex subunit RuvA (206 aa).

The interval 1 to 68 is domain I; sequence MITFVRGMLA…EDAMQLFGFL (68 aa). The domain II stretch occupies residues 69 to 147; the sequence is EPGERELFGQ…KWREESGLSA (79 aa). The flexible linker stretch occupies residues 147–151; it reads AMGAR. The tract at residues 152–206 is domain III; sequence ASSRVYEEVELALLALGFAPGEVVRALDAVAPAMAGEEQTEAWLRAAIAWLSEQG.

Belongs to the RuvA family. As to quaternary structure, homotetramer. Forms an RuvA(8)-RuvB(12)-Holliday junction (HJ) complex. HJ DNA is sandwiched between 2 RuvA tetramers; dsDNA enters through RuvA and exits via RuvB. An RuvB hexamer assembles on each DNA strand where it exits the tetramer. Each RuvB hexamer is contacted by two RuvA subunits (via domain III) on 2 adjacent RuvB subunits; this complex drives branch migration. In the full resolvosome a probable DNA-RuvA(4)-RuvB(12)-RuvC(2) complex forms which resolves the HJ.

It localises to the cytoplasm. Functionally, the RuvA-RuvB-RuvC complex processes Holliday junction (HJ) DNA during genetic recombination and DNA repair, while the RuvA-RuvB complex plays an important role in the rescue of blocked DNA replication forks via replication fork reversal (RFR). RuvA specifically binds to HJ cruciform DNA, conferring on it an open structure. The RuvB hexamer acts as an ATP-dependent pump, pulling dsDNA into and through the RuvAB complex. HJ branch migration allows RuvC to scan DNA until it finds its consensus sequence, where it cleaves and resolves the cruciform DNA. The sequence is that of Holliday junction branch migration complex subunit RuvA from Gloeobacter violaceus (strain ATCC 29082 / PCC 7421).